We begin with the raw amino-acid sequence, 348 residues long: N-acetyl-gamma-glutamyl-phosphate reductase (348 aa).

C149 is a catalytic residue.

Belongs to the NAGSA dehydrogenase family. Type 1 subfamily.

It is found in the cytoplasm. The catalysed reaction is N-acetyl-L-glutamate 5-semialdehyde + phosphate + NADP(+) = N-acetyl-L-glutamyl 5-phosphate + NADPH + H(+). It participates in amino-acid biosynthesis; L-arginine biosynthesis; N(2)-acetyl-L-ornithine from L-glutamate: step 3/4. Functionally, catalyzes the NADPH-dependent reduction of N-acetyl-5-glutamyl phosphate to yield N-acetyl-L-glutamate 5-semialdehyde. This is N-acetyl-gamma-glutamyl-phosphate reductase from Cellvibrio japonicus (strain Ueda107) (Pseudomonas fluorescens subsp. cellulosa).